A 561-amino-acid polypeptide reads, in one-letter code: NADH-quinone oxidoreductase subunit C/D (561 aa).

The tract at residues 1-152 is NADH dehydrogenase I subunit C; it reads MLEKFSSKFN…YQVLYESDDL (152 aa). The segment at 176–561 is NADH dehydrogenase I subunit D; it reads KYTFLNIGPS…LNIIAGELDR (386 aa).

It in the N-terminal section; belongs to the complex I 30 kDa subunit family. In the C-terminal section; belongs to the complex I 49 kDa subunit family. As to quaternary structure, NDH-1 is composed of 13 different subunits. Subunits NuoB, CD, E, F, and G constitute the peripheral sector of the complex.

It localises to the cell inner membrane. It catalyses the reaction a quinone + NADH + 5 H(+)(in) = a quinol + NAD(+) + 4 H(+)(out). Functionally, NDH-1 shuttles electrons from NADH, via FMN and iron-sulfur (Fe-S) centers, to quinones in the respiratory chain. The immediate electron acceptor for the enzyme in this species is believed to be ubiquinone. Couples the redox reaction to proton translocation (for every two electrons transferred, four hydrogen ions are translocated across the cytoplasmic membrane), and thus conserves the redox energy in a proton gradient. The sequence is that of NADH-quinone oxidoreductase subunit C/D from Campylobacter fetus subsp. fetus (strain 82-40).